Reading from the N-terminus, the 227-residue chain is Urease accessory protein UreF 2 (227 aa).

Belongs to the UreF family. As to quaternary structure, ureD, UreF and UreG form a complex that acts as a GTP-hydrolysis-dependent molecular chaperone, activating the urease apoprotein by helping to assemble the nickel containing metallocenter of UreC. The UreE protein probably delivers the nickel.

The protein resides in the cytoplasm. Required for maturation of urease via the functional incorporation of the urease nickel metallocenter. The chain is Urease accessory protein UreF 2 from Brucella anthropi (strain ATCC 49188 / DSM 6882 / CCUG 24695 / JCM 21032 / LMG 3331 / NBRC 15819 / NCTC 12168 / Alc 37) (Ochrobactrum anthropi).